Here is a 223-residue protein sequence, read N- to C-terminus: Cytidylate kinase (223 aa).

11-19 (GPAGVGKST) serves as a coordination point for ATP.

This sequence belongs to the cytidylate kinase family. Type 1 subfamily.

The protein resides in the cytoplasm. It catalyses the reaction CMP + ATP = CDP + ADP. It carries out the reaction dCMP + ATP = dCDP + ADP. The protein is Cytidylate kinase of Maridesulfovibrio salexigens (strain ATCC 14822 / DSM 2638 / NCIMB 8403 / VKM B-1763) (Desulfovibrio salexigens).